A 92-amino-acid polypeptide reads, in one-letter code: Small ribosomal subunit protein uS19c (92 aa).

It belongs to the universal ribosomal protein uS19 family.

The protein resides in the plastid. It is found in the chloroplast. Protein S19 forms a complex with S13 that binds strongly to the 16S ribosomal RNA. The protein is Small ribosomal subunit protein uS19c of Liriodendron tulipifera (Tuliptree).